Here is a 121-residue protein sequence, read N- to C-terminus: Prefoldin subunit beta (121 aa).

Belongs to the prefoldin subunit beta family. In terms of assembly, heterohexamer of two alpha and four beta subunits.

The protein resides in the cytoplasm. Its function is as follows. Molecular chaperone capable of stabilizing a range of proteins. Seems to fulfill an ATP-independent, HSP70-like function in archaeal de novo protein folding. The protein is Prefoldin subunit beta of Methanoculleus marisnigri (strain ATCC 35101 / DSM 1498 / JR1).